Consider the following 454-residue polypeptide: Replicative DNA helicase DnaB (454 aa).

Positions 1-149 (MSELFSERIP…LDEADRKIME (149 aa)) are N-terminal domain (NTD). Residues 163–176 (KDILVQTYDNIEML) are linker helix. The 267-residue stretch at 179–445 (RDGEITGIPT…NKFVNLERRF (267 aa)) folds into the SF4 helicase domain. The C-terminal domain (CTD) stretch occupies residues 183-454 (ITGIPTGFTE…FDEAQIPPGA (272 aa)). 5 residues coordinate ATP: Ser213, Gly215, Lys216, Thr217, and Ala218. The active-site Nucleophile is the Glu241. Residues Arg250 and Gln362 each coordinate ATP. SsDNA contacts are provided by Arg381, Glu382, and Gly384. ATP contacts are provided by Lys418, Gln419, and Arg420.

Belongs to the helicase family. DnaB subfamily. In terms of assembly, homohexamer. Interacts with DnaG primase, as DnaB(6):DnaG(3). Interacts with the N-terminus of DnaI (shown with DnaI of B.subtilis), forms a helicase DnaB(6):DnaI(6) complex. The DnaB-DnaI complex is disrupted by DnaD (DnaD and DnaI from B.subtilis). A stable complex DnaI(6):DnaB(6):DnaG(3) fragment can be isolated; DnaI and DnaG do not contact each other (DnaI in this complex is derived from B.subtilis). Forms a complex with DNA clamp loader protein tau (shown with B.subtilis HolA) tau(3):DnaB(6); a single ATP hydrolysis even is sufficient for complex formation.

The enzyme catalyses Couples ATP hydrolysis with the unwinding of duplex DNA at the replication fork by translocating in the 5'-3' direction. This creates two antiparallel DNA single strands (ssDNA). The leading ssDNA polymer is the template for DNA polymerase III holoenzyme which synthesizes a continuous strand.. It catalyses the reaction ATP + H2O = ADP + phosphate + H(+). In terms of biological role, the main replicative DNA helicase, it participates in initiation and elongation during chromosome replication. Travels ahead of the DNA replisome, separating double-stranded (ds)DNA into templates for DNA synthesis. Binding of single-stranded (ss)DNA to the hexamer suggests a 2-nucleotide step size for the helicase and a hand-over-hand mechanism of DNA unwinding. Has ssDNA-stimulated ATPase activity. DnaG primase stimulates the helicase activity (the helicase direction was not determine but is probably 5'-3'). Loaded onto DNA by helicase loader DnaI (shown with DnaI of B.subtilis); ATP-binding enhances loading and subsequent ATP hydrolysis dissociates the complex, leaving helicase on the DNA. Binds ssDNA and less well dsDNA, in the presence of ADPNP (probably 5'-adenylyl beta, gamma-imidodiphosphate, but not ATP) binding to both DNAs is improved. The polypeptide is Replicative DNA helicase DnaB (Geobacillus stearothermophilus (Bacillus stearothermophilus)).